A 564-amino-acid chain; its full sequence is Apyrase (564 aa).

A signal peptide spans 1-25 (MAGKPGIQLFVIFLLLSSFAAVVWA). A divalent metal cation-binding residues include D48, H50, D99, N131, H234, and H258. R371 contacts AMP. Residue N391 is glycosylated (N-linked (GlcNAc...) asparagine). AMP is bound by residues R406, F425, and D515.

It belongs to the 5'-nucleotidase family. Requires a divalent metal cation as cofactor. As to expression, female salivary gland (at protein level). Low-level expression in male tissues. Not detected in female carcasses without salivary glands.

It is found in the secreted. It catalyses the reaction a ribonucleoside 5'-triphosphate + 2 H2O = a ribonucleoside 5'-phosphate + 2 phosphate + 2 H(+). Its function is as follows. Facilitates hematophagy by inhibiting ADP-dependent platelet aggregation in the host. Cleaves adenosine triphosphate (ATP) and adenosine diphosphate (ADP) to adenosine monophosphate (AMP) and inorganic phosphate. May reduce probing time by facilitating the speed of locating blood. In Aedes albopictus (Asian tiger mosquito), this protein is Apyrase.